A 211-amino-acid polypeptide reads, in one-letter code: Protein-methionine-sulfoxide reductase heme-binding subunit MsrQ (211 aa).

4 helical membrane-spanning segments follow: residues 17-37 (LAGL…GLGA), 82-102 (LWCF…ELGV), 116-136 (PYLT…FTST), and 153-173 (FVYL…KIIS).

Belongs to the MsrQ family. As to quaternary structure, heterodimer of a catalytic subunit (MsrP) and a heme-binding subunit (MsrQ). It depends on FMN as a cofactor. Heme b serves as cofactor.

Its subcellular location is the cell inner membrane. Functionally, part of the MsrPQ system that repairs oxidized periplasmic proteins containing methionine sulfoxide residues (Met-O), using respiratory chain electrons. Thus protects these proteins from oxidative-stress damage caused by reactive species of oxygen and chlorine generated by the host defense mechanisms. MsrPQ is essential for the maintenance of envelope integrity under bleach stress, rescuing a wide series of structurally unrelated periplasmic proteins from methionine oxidation, including the primary periplasmic chaperone SurA and the lipoprotein Pal. MsrQ provides electrons for reduction to the reductase catalytic subunit MsrP, using the quinone pool of the respiratory chain. This is Protein-methionine-sulfoxide reductase heme-binding subunit MsrQ from Shigella sonnei (strain Ss046).